The chain runs to 82 residues: Conotoxin C11GB (82 aa).

An N-terminal signal peptide occupies residues 1 to 22; sequence MKLTCVMIVAVLFLTAWTVVTA. Positions 23–53 are excised as a propeptide; sequence EPHSSNVLENLYLKAHHEMENPEASKLNTRD. 3 disulfide bridges follow: C55–C72, C62–C76, and C71–C80.

Belongs to the conotoxin O1 superfamily. As to expression, expressed by the venom duct.

It localises to the secreted. This Conus vexillum (Flag cone) protein is Conotoxin C11GB.